The chain runs to 250 residues: Peroxiredoxin (250 aa).

Residues 6–163 enclose the Thioredoxin domain; that stretch reads PLIGERFPEM…ILRIVKALKL (158 aa). C50 serves as the catalytic Cysteine sulfenic acid (-SOH) intermediate. Substrate is bound at residue R126. A disulfide bridge connects residues C207 and C213.

Belongs to the peroxiredoxin family. Prx6 subfamily. As to quaternary structure, homodecamer. Pentamer of dimers that assemble into a ring structure.

The protein resides in the cytoplasm. It carries out the reaction a hydroperoxide + [thioredoxin]-dithiol = an alcohol + [thioredoxin]-disulfide + H2O. Thiol-specific peroxidase that catalyzes the reduction of hydrogen peroxide and organic hydroperoxides to water and alcohols, respectively. Plays a role in cell protection against oxidative stress by detoxifying peroxides. In Aeropyrum pernix (strain ATCC 700893 / DSM 11879 / JCM 9820 / NBRC 100138 / K1), this protein is Peroxiredoxin.